The chain runs to 86 residues: OMEGA-stichotoxin-Shd4a (86 aa).

The first 23 residues, 1-23 (MASFRTLFACVVILCCVLWSSMA), serve as a signal peptide directing secretion. Residues 24-36 (RYGEDMEVETEMN) constitute a propeptide that is removed on maturation. An EGF-like domain is found at 40–82 (EGVRCTGQHASSFCLNGGTCRHIASLGEYYCICPGDYTGHRCD). 3 cysteine pairs are disulfide-bonded: C44/C59, C53/C70, and C72/C81.

It belongs to the EGF domain peptide family.

It localises to the secreted. The protein resides in the nematocyst. In terms of biological role, has both toxic and EGF activity. Its EGF activity consists of rounding cells (morphological change) and inducing tyrosine phosphorylation of the EGFR in A431 cells, but with a lower potency that human EGF. The protein is OMEGA-stichotoxin-Shd4a of Stichodactyla haddoni (Saddle carpet anemone).